The sequence spans 227 residues: Abasic site processing protein YoaM (227 aa).

Cysteine 2 (nucleophile) is an active-site residue. Cysteine 2 is modified (thiazolidine linkage to a ring-opened DNA abasic site). Glutamate 106 is a catalytic residue.

It belongs to the SOS response-associated peptidase family.

Formation and reversal of DNA-protein cross-link depends on DNA context. Catalyzes formation of the thiazolidine linkage in presence of abasic sites in single-stranded DNA. Mediates the reversal of the thiazolidine cross-link in presence of double stranded DNA. In terms of biological role, sensor of abasic sites in single-stranded DNA (ssDNA) required to preserve genome integrity by promoting error-free repair of abasic sites. Recognizes and binds abasic sites in ssDNA at replication forks and chemically modifies the lesion by forming a covalent cross-link with DNA: forms a stable thiazolidine linkage between a ring-opened abasic site and the alpha-amino and sulfhydryl substituents of its N-terminal catalytic cysteine residue. The DNA-protein cross-link is then reversed: able to catalyze the reversal of the thiazolidine cross-link and cycle between a cross-link and a non-cross-linked state depending on DNA context: mediates self-reversal of the thiazolidine cross-link in double stranded DNA. May act as a protease: mediates autocatalytic processing of its N-terminal methionine in order to expose the catalytic cysteine. The sequence is that of Abasic site processing protein YoaM (yoaM) from Bacillus subtilis (strain 168).